Consider the following 269-residue polypeptide: 5'-nucleotidase SurE (269 aa).

4 residues coordinate a divalent metal cation: Asp-11, Asp-12, Ser-43, and Asn-101.

This sequence belongs to the SurE nucleotidase family. A divalent metal cation serves as cofactor.

The protein resides in the cytoplasm. The catalysed reaction is a ribonucleoside 5'-phosphate + H2O = a ribonucleoside + phosphate. Its function is as follows. Nucleotidase that shows phosphatase activity on nucleoside 5'-monophosphates. This Prochlorococcus marinus (strain MIT 9211) protein is 5'-nucleotidase SurE.